Consider the following 613-residue polypeptide: Thymidine kinase (613 aa).

Disordered regions lie at residues 1–233 (MAEG…GVKS) and 253–276 (SDGE…ATPR). Low complexity predominate over residues 8–18 (FSSSSTSSEEA). The segment covering 78–88 (PKNEPRPERGK) has biased composition (basic and acidic residues). Positions 114–126 (LGSRTRSKSRSRD) are enriched in basic residues. Positions 199-218 (HRYDKPSYDEEVCQKKDKGG) are enriched in basic and acidic residues. 301-308 (GSMGVGKT) serves as a coordination point for ATP. The Proton acceptor role is filled by Glu-327. Substrate contacts are provided by Tyr-344, Gln-365, and Arg-461.

Belongs to the herpesviridae thymidine kinase family. In terms of assembly, homodimer.

The catalysed reaction is thymidine + ATP = dTMP + ADP + H(+). Functionally, catalyzes the transfer of the gamma-phospho group of ATP to thymidine to generate dTMP in the salvage pathway of pyrimidine synthesis. The dTMP serves as a substrate for DNA polymerase during viral DNA replication. Allows the virus to be reactivated and to grow in non-proliferative cells lacking a high concentration of phosphorylated nucleic acid precursors. This is Thymidine kinase from Equine herpesvirus 2 (strain 86/87) (EHV-2).